The sequence spans 1487 residues: Major viral transcription factor (1487 aa).

3 disordered regions span residues 41–295 (AAPD…LPPG), 310–370 (LAKT…AEEA), and 803–1007 (PPTR…HTPR). Over residues 66-75 (VIPPPSPTPE) the composition is skewed to pro residues. 2 stretches are compositionally biased toward low complexity: residues 165–193 (PSSASPGGGSPAPRVRSISISSSSSSSSS) and 201–213 (DGAGASSSSSSSS). The span at 214–224 (DDSDSDEGGEE) shows a compositional bias: acidic residues. Residues 235-272 (AAKTPSAAGSPGPSSGGDRPAAGAATPKSCRSGAASPG) are compositionally biased toward low complexity. A compositionally biased stretch (pro residues) spans 273–285 (APAPAPASAPAPS). Low complexity-rich tracts occupy residues 807–829 (SQQPSSSSPGGEPFSGSAAAEGS), 849–860 (PSSHSQSPQHSQ), and 867–877 (ATTATCCRATQ). The span at 878 to 893 (TNARSRGQQHQPQKAR) shows a compositional bias: polar residues. Basic residues predominate over residues 920 to 929 (HGRPRGKSGK). Residues 938–951 (AAQAGASASFSSSA) show a composition bias toward low complexity. The span at 988-1007 (GPDRRGGFRRVPRGDCHTPR) shows a compositional bias: basic and acidic residues.

It belongs to the herpesviridae ICP4 family. Post-translationally, a long stretch of serine residues may be a major site of phosphorylation.

It localises to the host nucleus. Its function is as follows. This IE protein is a multifunctional protein capable of migrating to the nucleus, binding to DNA, trans-activating other viral genes, and autoregulating its own synthesis. In Equine herpesvirus 1 (strain Ab4p) (EHV-1), this protein is Major viral transcription factor (IE).